Here is a 99-residue protein sequence, read N- to C-terminus: Large ribosomal subunit protein eL36 (99 aa).

It belongs to the eukaryotic ribosomal protein eL36 family. As to quaternary structure, component of the large ribosomal subunit. Mature ribosomes consist of a small (40S) and a large (60S) subunit. The 40S subunit contains about 32 different proteins and 1 molecule of RNA (18S). The 60S subunit contains 45 different proteins and 3 molecules of RNA (25S, 5.8S and 5S).

It is found in the cytoplasm. Functionally, component of the ribosome, a large ribonucleoprotein complex responsible for the synthesis of proteins in the cell. The small ribosomal subunit (SSU) binds messenger RNAs (mRNAs) and translates the encoded message by selecting cognate aminoacyl-transfer RNA (tRNA) molecules. The large subunit (LSU) contains the ribosomal catalytic site termed the peptidyl transferase center (PTC), which catalyzes the formation of peptide bonds, thereby polymerizing the amino acids delivered by tRNAs into a polypeptide chain. The nascent polypeptides leave the ribosome through a tunnel in the LSU and interact with protein factors that function in enzymatic processing, targeting, and the membrane insertion of nascent chains at the exit of the ribosomal tunnel. The sequence is that of Large ribosomal subunit protein eL36 from Candida albicans (strain SC5314 / ATCC MYA-2876) (Yeast).